We begin with the raw amino-acid sequence, 729 residues long: Cellulose synthase-like protein E1 (729 aa).

Transmembrane regions (helical) follow at residues 29–49 (VIAY…IWFY) and 64–84 (LIWF…VVTQ). Catalysis depends on residues aspartate 152 and aspartate 443. 5 helical membrane-spanning segments follow: residues 526–546 (LPVL…IPLF), 553–573 (WFIP…AEFL), 644–664 (MFLV…AAVA), 680–700 (QFVI…GMLL), and 709–729 (MSVT…LAFL).

Belongs to the glycosyltransferase 2 family. Plant cellulose synthase-like E subfamily.

It is found in the golgi apparatus membrane. Thought to be a Golgi-localized beta-glycan synthase that polymerize the backbones of noncellulosic polysaccharides (hemicelluloses) of plant cell wall. This Arabidopsis thaliana (Mouse-ear cress) protein is Cellulose synthase-like protein E1 (CSLE1).